The sequence spans 388 residues: Cuticle-degrading protease (388 aa).

Residues 1 to 18 form the signal peptide; it reads MHLSALLTLLPAVLAAPA. The propeptide occupies 19–107; sequence TIGRRAEPAP…IEKDAVMRIS (89 aa). The region spanning 41–106 is the Inhibitor I9 domain; sequence KYIVKFKDDI…FIEKDAVMRI (66 aa). Positions 116 to 388 constitute a Peptidase S8 domain; that stretch reads PWGLGRISHR…TVNYLAYNGA (273 aa). 2 cysteine pairs are disulfide-bonded: Cys143–Cys233 and Cys288–Cys360. Catalysis depends on charge relay system residues Asp148 and His179. Asn296 carries N-linked (GlcNAc...) asparagine glycosylation. Ser334 functions as the Charge relay system in the catalytic mechanism.

Belongs to the peptidase S8 family.

Its subcellular location is the secreted. Functionally, capable of breaching the insect cuticle. This is Cuticle-degrading protease (PR1) from Metarhizium anisopliae (Entomophthora anisopliae).